Here is a 381-residue protein sequence, read N- to C-terminus: Sterol 24-C-methyltransferase ERG6A (381 aa).

It belongs to the class I-like SAM-binding methyltransferase superfamily. Erg6/SMT family.

The enzyme catalyses lanosterol + S-adenosyl-L-methionine = eburicol + S-adenosyl-L-homocysteine + H(+). It participates in steroid metabolism; ergosterol biosynthesis. Its function is as follows. Sterol 24-C-methyltransferase; part of the third module of ergosterol biosynthesis pathway that includes the late steps of the pathway. ERG6A and ERG6B methylate lanosterol at C-24 to produce eburicol. The third module or late pathway involves the ergosterol synthesis itself through consecutive reactions that mainly occur in the endoplasmic reticulum (ER) membrane. Firstly, the squalene synthase ERG9 catalyzes the condensation of 2 farnesyl pyrophosphate moieties to form squalene, which is the precursor of all steroids. Squalene synthase is crucial for balancing the incorporation of farnesyl diphosphate (FPP) into sterol and nonsterol isoprene synthesis. Secondly, squalene is converted into lanosterol by the consecutive action of the squalene epoxidase ERG1 and the lanosterol synthase ERG7. Then, the delta(24)-sterol C-methyltransferase ERG6 methylates lanosterol at C-24 to produce eburicol. Eburicol is the substrate of the sterol 14-alpha demethylase encoded by CYP51A, CYP51B and CYP51C, to yield 4,4,24-trimethyl ergosta-8,14,24(28)-trienol. CYP51B encodes the enzyme primarily responsible for sterol 14-alpha-demethylation, and plays an essential role in ascospore formation. CYP51A encodes an additional sterol 14-alpha-demethylase, induced on ergosterol depletion and responsible for the intrinsic variation in azole sensitivity. The third CYP51 isoform, CYP51C, does not encode a sterol 14-alpha-demethylase, but is required for full virulence on host wheat ears. The C-14 reductase ERG24 then reduces the C14=C15 double bond which leads to 4,4-dimethylfecosterol. A sequence of further demethylations at C-4, involving the C-4 demethylation complex containing the C-4 methylsterol oxidases ERG25, the sterol-4-alpha-carboxylate 3-dehydrogenase ERG26 and the 3-keto-steroid reductase ERG27, leads to the production of fecosterol via 4-methylfecosterol. ERG28 has a role as a scaffold to help anchor ERG25, ERG26 and ERG27 to the endoplasmic reticulum. The C-8 sterol isomerase ERG2 then catalyzes the reaction which results in unsaturation at C-7 in the B ring of sterols and thus converts fecosterol to episterol. The sterol-C5-desaturases ERG3A and ERG3BB then catalyze the introduction of a C-5 double bond in the B ring to produce 5-dehydroepisterol. The C-22 sterol desaturases ERG5A and ERG5B further convert 5-dehydroepisterol into ergosta-5,7,22,24(28)-tetraen-3beta-ol by forming the C-22(23) double bond in the sterol side chain. Finally, ergosta-5,7,22,24(28)-tetraen-3beta-ol is substrate of the C-24(28) sterol reductase ERG4 to produce ergosterol. The protein is Sterol 24-C-methyltransferase ERG6A (FG02783.1) of Gibberella zeae (strain ATCC MYA-4620 / CBS 123657 / FGSC 9075 / NRRL 31084 / PH-1) (Wheat head blight fungus).